The sequence spans 90 residues: MSENTAERTTRRKVREGLVVSDKMNKTITVMVEDRVKHPLYGKVMTKSVRLKAHDENNEAGMGDRVRIMETRPLSATKRWRLVEIIEKAK.

Belongs to the universal ribosomal protein uS17 family. As to quaternary structure, part of the 30S ribosomal subunit.

One of the primary rRNA binding proteins, it binds specifically to the 5'-end of 16S ribosomal RNA. The protein is Small ribosomal subunit protein uS17 of Cutibacterium acnes (strain DSM 16379 / KPA171202) (Propionibacterium acnes).